We begin with the raw amino-acid sequence, 1308 residues long: Chromosome partition protein Smc (1308 aa).

Pro34 to Asn41 contacts ATP. The segment at Ala115–Gln181 is disordered. Residues Thr137 to Pro169 show a composition bias toward low complexity. The stretch at Ile278–Leu600 forms a coiled coil. The region spanning Ala637–Leu757 is the SMC hinge domain. Coiled-coil stretches lie at residues Ser791–Ala1046 and Met1110–Gln1148.

It belongs to the SMC family. As to quaternary structure, homodimer.

The protein resides in the cytoplasm. In terms of biological role, required for chromosome condensation and partitioning. This chain is Chromosome partition protein Smc, found in Koribacter versatilis (strain Ellin345).